Reading from the N-terminus, the 97-residue chain is Small ribosomal subunit protein bS20 (97 aa).

This sequence belongs to the bacterial ribosomal protein bS20 family.

Its function is as follows. Binds directly to 16S ribosomal RNA. This is Small ribosomal subunit protein bS20 from Methylibium petroleiphilum (strain ATCC BAA-1232 / LMG 22953 / PM1).